Reading from the N-terminus, the 313-residue chain is tRNA dimethylallyltransferase (313 aa).

11–18 (GPTAGGKT) is a binding site for ATP. Substrate is bound at residue 13 to 18 (TAGGKT). Interaction with substrate tRNA stretches follow at residues 36-39 (DSAL), 160-164 (QRIGR), and 243-248 (RCVGYR).

It belongs to the IPP transferase family. Monomer. It depends on Mg(2+) as a cofactor.

It carries out the reaction adenosine(37) in tRNA + dimethylallyl diphosphate = N(6)-dimethylallyladenosine(37) in tRNA + diphosphate. Its function is as follows. Catalyzes the transfer of a dimethylallyl group onto the adenine at position 37 in tRNAs that read codons beginning with uridine, leading to the formation of N6-(dimethylallyl)adenosine (i(6)A). This chain is tRNA dimethylallyltransferase, found in Neisseria meningitidis serogroup C / serotype 2a (strain ATCC 700532 / DSM 15464 / FAM18).